The chain runs to 417 residues: Serine hydroxymethyltransferase (417 aa).

(6S)-5,6,7,8-tetrahydrofolate contacts are provided by residues leucine 121 and 125–127 (GHL). An N6-(pyridoxal phosphate)lysine modification is found at lysine 229. Residue 355-357 (SSF) coordinates (6S)-5,6,7,8-tetrahydrofolate.

It belongs to the SHMT family. As to quaternary structure, homodimer. It depends on pyridoxal 5'-phosphate as a cofactor.

The protein resides in the cytoplasm. The catalysed reaction is (6R)-5,10-methylene-5,6,7,8-tetrahydrofolate + glycine + H2O = (6S)-5,6,7,8-tetrahydrofolate + L-serine. The protein operates within one-carbon metabolism; tetrahydrofolate interconversion. It functions in the pathway amino-acid biosynthesis; glycine biosynthesis; glycine from L-serine: step 1/1. Its function is as follows. Catalyzes the reversible interconversion of serine and glycine with tetrahydrofolate (THF) serving as the one-carbon carrier. This reaction serves as the major source of one-carbon groups required for the biosynthesis of purines, thymidylate, methionine, and other important biomolecules. Also exhibits THF-independent aldolase activity toward beta-hydroxyamino acids, producing glycine and aldehydes, via a retro-aldol mechanism. This Baumannia cicadellinicola subsp. Homalodisca coagulata protein is Serine hydroxymethyltransferase.